The sequence spans 133 residues: Profilin Sal k 4.0201 (133 aa).

An intrachain disulfide couples Cys95 to Cys117.

Belongs to the profilin family. Occurs in many kinds of cells as a complex with monomeric actin in a 1:1 ratio. In terms of tissue distribution, expressed in pollen (at protein and mRNA level).

Its subcellular location is the cytoplasm. It is found in the cytoskeleton. Binds to actin and affects the structure of the cytoskeleton. At high concentrations, profilin prevents the polymerization of actin, whereas it enhances it at low concentrations. In Kali turgidum (Prickly saltwort), this protein is Profilin Sal k 4.0201.